The following is an 83-amino-acid chain: Antitoxin ParD1 (83 aa).

The stretch at 33 to 60 (IRSALRLLEDRETQLRALREALEAGERS) forms a coiled coil. Residues 54–83 (LEAGERSGSSTPFDFDGFLGRKRADASRGR) form a disordered region.

The protein belongs to the ParD antitoxin family.

Functionally, antitoxin component of a type II toxin-antitoxin (TA) system. The chain is Antitoxin ParD1 (parD1) from Mycobacterium tuberculosis (strain CDC 1551 / Oshkosh).